Consider the following 138-residue polypeptide: Nucleoside diphosphate kinase (138 aa).

Positions 10, 58, 86, 92, 103, and 113 each coordinate ATP. The active-site Pros-phosphohistidine intermediate is the histidine 116.

Belongs to the NDK family. In terms of assembly, homotetramer. Mg(2+) serves as cofactor.

The protein resides in the cytoplasm. It catalyses the reaction a 2'-deoxyribonucleoside 5'-diphosphate + ATP = a 2'-deoxyribonucleoside 5'-triphosphate + ADP. The enzyme catalyses a ribonucleoside 5'-diphosphate + ATP = a ribonucleoside 5'-triphosphate + ADP. Its function is as follows. Major role in the synthesis of nucleoside triphosphates other than ATP. The ATP gamma phosphate is transferred to the NDP beta phosphate via a ping-pong mechanism, using a phosphorylated active-site intermediate. This is Nucleoside diphosphate kinase from Glaesserella parasuis serovar 5 (strain SH0165) (Haemophilus parasuis).